A 348-amino-acid polypeptide reads, in one-letter code: N-formyl peptide receptor 2 (348 aa).

Asparagine 1 carries N-linked (GlcNAc...) asparagine glycosylation. Residues 1 to 24 lie on the Extracellular side of the membrane; it reads NFSTPLNEYEEGSYESAGYTVLRI. Residues 25-47 traverse the membrane as a helical segment; it reads LPLVVLGVTFVLGVLGNGLVIWV. The Cytoplasmic segment spans residues 48–58; sequence AGFRMTRTVTT. Residues 59–80 form a helical membrane-spanning segment; that stretch reads ICYLNLALADFSFTATLPFLIV. The Extracellular portion of the chain corresponds to 81-97; it reads SMAMGEKWPFGWFLCKL. The cysteines at positions 95 and 173 are disulfide-linked. Residues 98-118 form a helical membrane-spanning segment; that stretch reads IHIVVDINLFGSVFLIGFIAL. The Cytoplasmic portion of the chain corresponds to 119 to 137; it reads DRCICVLHPVWAQNHRTVS. The helical transmembrane segment at 138 to 159 threads the bilayer; that stretch reads LAMKVIVGPWILALVLTLPVFL. At 160-202 the chain is on the extracellular side; sequence FLTTVTIPNGDTYCTFNFASWGGTPEERLKVAITLLTARGIIR. A helical membrane pass occupies residues 203–223; the sequence is FVIGFSLPMSIVAICYGLIAA. The Cytoplasmic portion of the chain corresponds to 224–239; it reads KIHKKGMIKSSRPLRV. Residues 240-263 traverse the membrane as a helical segment; sequence LTAVVASFFICWFPFQLVALLGTV. At 264–283 the chain is on the extracellular side; it reads WLKEMLFYGKYKIIDILVNP. A helical transmembrane segment spans residues 284 to 303; the sequence is TSSLAFFNCCLNPMLYVFVG. The Cytoplasmic portion of the chain corresponds to 304–348; that stretch reads QDFRERLIHSLPTSLERALSEDSAPTNDTAANCASPPAETELQAM. Residues 322–348 are disordered; the sequence is LSEDSAPTNDTAANCASPPAETELQAM. Residues 326-335 show a composition bias toward polar residues; the sequence is SAPTNDTAAN.

This sequence belongs to the G-protein coupled receptor 1 family. As to quaternary structure, interacts with Amyloid-beta protein 42, product of APP; the interaction takes place at the cell surface and the complex is then rapidly internalized.

It is found in the cell membrane. In terms of biological role, low affinity receptor for N-formyl-methionyl peptides, which are powerful neutrophil chemotactic factors. Binding of FMLP to the receptor causes activation of neutrophils. This response is mediated via a G-protein that activates a phosphatidylinositol-calcium second messenger system. Receptor for the chemokine-like protein FAM19A5, mediating FAM19A5-stimulated macrophage chemotaxis and the inhibitory effect on TNFSF11/RANKL-induced osteoclast differentiation. In Pan troglodytes (Chimpanzee), this protein is N-formyl peptide receptor 2 (FPR2).